A 617-amino-acid polypeptide reads, in one-letter code: Glutamyl-tRNA(Gln) amidotransferase subunit B, mitochondrial (617 aa).

Residues 1–56 (MPRIPTSVLGKYLLSGQISRQGCVGARQITRHSALPSAAVSVANSARLLHVSSETV) constitute a mitochondrion transit peptide. Positions 53-90 (SETVPPPPAQPVPLRKQLKDEAKKAKKQGKKKSKGDSQ) are disordered. Basic residues predominate over residues 76-85 (KAKKQGKKKS).

Belongs to the GatB/GatE family. GatB subfamily. In terms of assembly, subunit of the heterotrimeric GatCAB amidotransferase (AdT) complex, composed of A, B and C subunits.

The protein resides in the mitochondrion. It carries out the reaction L-glutamyl-tRNA(Gln) + L-glutamine + ATP + H2O = L-glutaminyl-tRNA(Gln) + L-glutamate + ADP + phosphate + H(+). In terms of biological role, allows the formation of correctly charged Gln-tRNA(Gln) through the transamidation of misacylated Glu-tRNA(Gln) in the mitochondria. The reaction takes place in the presence of glutamine and ATP through an activated gamma-phospho-Glu-tRNA(Gln). This is Glutamyl-tRNA(Gln) amidotransferase subunit B, mitochondrial from Fusarium vanettenii (strain ATCC MYA-4622 / CBS 123669 / FGSC 9596 / NRRL 45880 / 77-13-4) (Fusarium solani subsp. pisi).